The sequence spans 114 residues: Replication initiation control protein YabA (114 aa).

H79, C81, C95, and C98 together coordinate Zn(2+).

It belongs to the YabA family. As to quaternary structure, homotetramer. Interacts with both DnaA and DnaN, acting as a bridge between these two proteins. The cofactor is Zn(2+).

It localises to the cytoplasm. The protein resides in the nucleoid. Functionally, involved in control of chromosome replication initiation. Inhibits the cooperative binding of DnaA to the oriC region, thus negatively regulating initiation of chromosome replication. Inhibits the ability of DnaA-ATP to form a helix on DNA; does not disassemble preformed DnaA-DNA helices. Decreases the residence time of DnaA on the chromosome at its binding sites (oriC, replication forks and promoter-binding sites). Tethers DnaA to the replication machinery via the DNA polymerase beta sliding clamp subunit (dnaN). Associates with oriC and other DnaA targets on the chromosome in a DnaA-dependent manner. In Lactobacillus gasseri (strain ATCC 33323 / DSM 20243 / BCRC 14619 / CIP 102991 / JCM 1131 / KCTC 3163 / NCIMB 11718 / NCTC 13722 / AM63), this protein is Replication initiation control protein YabA.